The primary structure comprises 261 residues: MAHQSHAYHMVKPSPWPLTGALSALLTTSGLTMWFHFHSTTLLLTGLLTNALTMYQWWRDVVRESTYQGHHTLPVQKGLRYGMILFITSEVFFFAGFFWAFYHSSLAPTPQLGGHWPPTGIIPLNPLEVPLLNTSVLLASGVSITWAHHSLMENNRTQMIQALLITILLGIYFTLLQASEYIEAPFTISDGIYGSTFFMATGFHGLHVIIGSTFLTVCLARQLLFHFTSKHHFGFEAAAWYWHFVDVVWLFLYVSIYWWGS.

The Mitochondrial matrix segment spans residues 1 to 15; that stretch reads MAHQSHAYHMVKPSP. Residues 16-34 form a helical membrane-spanning segment; it reads WPLTGALSALLTTSGLTMW. Over 35-40 the chain is Mitochondrial intermembrane; that stretch reads FHFHST. The helical transmembrane segment at 41–66 threads the bilayer; sequence TLLLTGLLTNALTMYQWWRDVVREST. At 67–72 the chain is on the mitochondrial matrix side; sequence YQGHHT. A helical transmembrane segment spans residues 73 to 105; it reads LPVQKGLRYGMILFITSEVFFFAGFFWAFYHSS. Topologically, residues 106–128 are mitochondrial intermembrane; it reads LAPTPQLGGHWPPTGIIPLNPLE. Residues 129 to 152 traverse the membrane as a helical segment; that stretch reads VPLLNTSVLLASGVSITWAHHSLM. At 153 to 155 the chain is on the mitochondrial matrix side; sequence ENN. A helical transmembrane segment spans residues 156–183; sequence RTQMIQALLITILLGIYFTLLQASEYIE. The Mitochondrial intermembrane portion of the chain corresponds to 184–190; the sequence is APFTISD. A helical membrane pass occupies residues 191-223; sequence GIYGSTFFMATGFHGLHVIIGSTFLTVCLARQL. Residues 224–232 lie on the Mitochondrial matrix side of the membrane; that stretch reads LFHFTSKHH. Residues 233–256 form a helical membrane-spanning segment; the sequence is FGFEAAAWYWHFVDVVWLFLYVSI. Residues 257 to 261 lie on the Mitochondrial intermembrane side of the membrane; the sequence is YWWGS.

The protein belongs to the cytochrome c oxidase subunit 3 family. Component of the cytochrome c oxidase (complex IV, CIV), a multisubunit enzyme composed of 14 subunits. The complex is composed of a catalytic core of 3 subunits MT-CO1, MT-CO2 and MT-CO3, encoded in the mitochondrial DNA, and 11 supernumerary subunits COX4I, COX5A, COX5B, COX6A, COX6B, COX6C, COX7A, COX7B, COX7C, COX8 and NDUFA4, which are encoded in the nuclear genome. The complex exists as a monomer or a dimer and forms supercomplexes (SCs) in the inner mitochondrial membrane with NADH-ubiquinone oxidoreductase (complex I, CI) and ubiquinol-cytochrome c oxidoreductase (cytochrome b-c1 complex, complex III, CIII), resulting in different assemblies (supercomplex SCI(1)III(2)IV(1) and megacomplex MCI(2)III(2)IV(2)).

Its subcellular location is the mitochondrion inner membrane. It carries out the reaction 4 Fe(II)-[cytochrome c] + O2 + 8 H(+)(in) = 4 Fe(III)-[cytochrome c] + 2 H2O + 4 H(+)(out). Component of the cytochrome c oxidase, the last enzyme in the mitochondrial electron transport chain which drives oxidative phosphorylation. The respiratory chain contains 3 multisubunit complexes succinate dehydrogenase (complex II, CII), ubiquinol-cytochrome c oxidoreductase (cytochrome b-c1 complex, complex III, CIII) and cytochrome c oxidase (complex IV, CIV), that cooperate to transfer electrons derived from NADH and succinate to molecular oxygen, creating an electrochemical gradient over the inner membrane that drives transmembrane transport and the ATP synthase. Cytochrome c oxidase is the component of the respiratory chain that catalyzes the reduction of oxygen to water. Electrons originating from reduced cytochrome c in the intermembrane space (IMS) are transferred via the dinuclear copper A center (CU(A)) of subunit 2 and heme A of subunit 1 to the active site in subunit 1, a binuclear center (BNC) formed by heme A3 and copper B (CU(B)). The BNC reduces molecular oxygen to 2 water molecules using 4 electrons from cytochrome c in the IMS and 4 protons from the mitochondrial matrix. This is Cytochrome c oxidase subunit 3 (MT-CO3) from Pongo abelii (Sumatran orangutan).